The following is a 395-amino-acid chain: Elongation factor Tu (395 aa).

The region spanning 10–204 (KPHVNIGTIG…AVDEYIPTPQ (195 aa)) is the tr-type G domain. The G1 stretch occupies residues 19–26 (GHVDHGKT). A GTP-binding site is contributed by 19–26 (GHVDHGKT). Residue Thr-26 coordinates Mg(2+). The tract at residues 60 to 64 (GITIS) is G2. Residues 81 to 84 (DCPG) form a G3 region. GTP contacts are provided by residues 81-85 (DCPGH) and 136-139 (NKCD). Positions 136 to 139 (NKCD) are G4. The G5 stretch occupies residues 174 to 176 (SAL).

This sequence belongs to the TRAFAC class translation factor GTPase superfamily. Classic translation factor GTPase family. EF-Tu/EF-1A subfamily. In terms of assembly, monomer.

The protein localises to the cytoplasm. The enzyme catalyses GTP + H2O = GDP + phosphate + H(+). Its function is as follows. GTP hydrolase that promotes the GTP-dependent binding of aminoacyl-tRNA to the A-site of ribosomes during protein biosynthesis. This chain is Elongation factor Tu, found in Geobacillus sp. (strain WCH70).